Here is a 142-residue protein sequence, read N- to C-terminus: 3-hydroxyacyl-[acyl-carrier-protein] dehydratase FabZ (142 aa).

Histidine 48 is a catalytic residue.

It belongs to the thioester dehydratase family. FabZ subfamily.

It localises to the cytoplasm. It carries out the reaction a (3R)-hydroxyacyl-[ACP] = a (2E)-enoyl-[ACP] + H2O. Functionally, involved in unsaturated fatty acids biosynthesis. Catalyzes the dehydration of short chain beta-hydroxyacyl-ACPs and long chain saturated and unsaturated beta-hydroxyacyl-ACPs. The sequence is that of 3-hydroxyacyl-[acyl-carrier-protein] dehydratase FabZ from Clostridioides difficile (strain 630) (Peptoclostridium difficile).